Reading from the N-terminus, the 363-residue chain is Pyrimidine monooxygenase RutA (363 aa).

Residues 49 to 50 (IK), N115, E124, 140 to 141 (RY), and S190 each bind FMN.

Belongs to the NtaA/SnaA/DszA monooxygenase family. RutA subfamily.

The catalysed reaction is uracil + FMNH2 + NADH + O2 = (Z)-3-ureidoacrylate + FMN + NAD(+) + H2O + H(+). It carries out the reaction thymine + FMNH2 + NADH + O2 = (Z)-2-methylureidoacrylate + FMN + NAD(+) + H2O + H(+). Functionally, catalyzes the pyrimidine ring opening between N-3 and C-4 by an unusual flavin hydroperoxide-catalyzed mechanism, adding oxygen atoms in the process to yield ureidoacrylate peracid, that immediately reacts with FMN forming ureidoacrylate and FMN-N(5)-oxide. The FMN-N(5)-oxide reacts spontaneously with NADH to produce FMN. Requires the flavin reductase RutF to regenerate FMN in vivo. This chain is Pyrimidine monooxygenase RutA, found in Escherichia coli O44:H18 (strain 042 / EAEC).